The sequence spans 102 residues: Large ribosomal subunit protein bL21 (102 aa).

The protein belongs to the bacterial ribosomal protein bL21 family. In terms of assembly, part of the 50S ribosomal subunit. Contacts protein L20.

Functionally, this protein binds to 23S rRNA in the presence of protein L20. The chain is Large ribosomal subunit protein bL21 from Bacillus anthracis (strain A0248).